The primary structure comprises 201 residues: MSSLRQSEIKRKTNETDISVFINLDGNGISEIETGIPFLDHMLHQISSHGLFDLKIKAIGDTHIDDHHTNEDVGIALGKAFSKALGERKGISRFGHFFAPLDEALVQVTLDCSGRPHLSYDLQLKAPRIGNYDTELVKEFFIAFVNNSGITLHINQIRGSNSHHIVEACFKAFSRAMRMATEIDLRRSDSIPSSKGMLENQ.

This sequence belongs to the imidazoleglycerol-phosphate dehydratase family.

It localises to the cytoplasm. It catalyses the reaction D-erythro-1-(imidazol-4-yl)glycerol 3-phosphate = 3-(imidazol-4-yl)-2-oxopropyl phosphate + H2O. It participates in amino-acid biosynthesis; L-histidine biosynthesis; L-histidine from 5-phospho-alpha-D-ribose 1-diphosphate: step 6/9. This is Imidazoleglycerol-phosphate dehydratase from Prochlorococcus marinus subsp. pastoris (strain CCMP1986 / NIES-2087 / MED4).